The following is a 118-amino-acid chain: V-type proton ATPase subunit F (118 aa).

This sequence belongs to the V-ATPase F subunit family. As to quaternary structure, V-ATPase is a heteromultimeric enzyme composed of a peripheral catalytic V1 complex (components A to H) attached to an integral membrane V0 proton pore complex (components: a, c, c', c'', d, e, f and VOA1).

The protein resides in the vacuole membrane. Its function is as follows. Subunit of the V1 complex of vacuolar(H+)-ATPase (V-ATPase), a multisubunit enzyme composed of a peripheral complex (V1) that hydrolyzes ATP and a membrane integral complex (V0) that translocates protons. V-ATPase is responsible for acidifying and maintaining the pH of intracellular compartments. The sequence is that of V-type proton ATPase subunit F from Saccharomyces cerevisiae (strain ATCC 204508 / S288c) (Baker's yeast).